Consider the following 340-residue polypeptide: S-adenosylmethionine:tRNA ribosyltransferase-isomerase (340 aa).

Belongs to the QueA family. As to quaternary structure, monomer.

It localises to the cytoplasm. It catalyses the reaction 7-aminomethyl-7-carbaguanosine(34) in tRNA + S-adenosyl-L-methionine = epoxyqueuosine(34) in tRNA + adenine + L-methionine + 2 H(+). It functions in the pathway tRNA modification; tRNA-queuosine biosynthesis. Transfers and isomerizes the ribose moiety from AdoMet to the 7-aminomethyl group of 7-deazaguanine (preQ1-tRNA) to give epoxyqueuosine (oQ-tRNA). The protein is S-adenosylmethionine:tRNA ribosyltransferase-isomerase of Macrococcus caseolyticus (strain JCSC5402) (Macrococcoides caseolyticum).